A 151-amino-acid polypeptide reads, in one-letter code: UPF0756 membrane protein GK2737 (151 aa).

4 consecutive transmembrane segments (helical) span residues 5 to 25 (VLFLLLLLALGFLAKNKSLIV), 53 to 73 (WGVTVITIAVLAPIASGEIGF), 79 to 99 (SLQSLSAWVALASGIFVALIA), and 121 to 141 (ILAVSLFHGVAVGPLIGAGIA).

This sequence belongs to the UPF0756 family.

It localises to the cell membrane. This is UPF0756 membrane protein GK2737 from Geobacillus kaustophilus (strain HTA426).